Reading from the N-terminus, the 63-residue chain is Beta-glucosidase A-3 (63 aa).

Residue Asp-12 is part of the active site. Residues Asn-48 and Asn-56 are each glycosylated (N-linked (GlcNAc...) asparagine).

Belongs to the glycosyl hydrolase 3 family.

It carries out the reaction Hydrolysis of terminal, non-reducing beta-D-glucosyl residues with release of beta-D-glucose.. It functions in the pathway glycan metabolism; cellulose degradation. The polypeptide is Beta-glucosidase A-3 (Aspergillus wentii).